Here is a 340-residue protein sequence, read N- to C-terminus: UDP-3-O-(3-hydroxymyristoyl)glucosamine N-acyltransferase (340 aa).

His239 acts as the Proton acceptor in catalysis.

This sequence belongs to the transferase hexapeptide repeat family. LpxD subfamily. In terms of assembly, homotrimer.

It carries out the reaction a UDP-3-O-[(3R)-3-hydroxyacyl]-alpha-D-glucosamine + a (3R)-hydroxyacyl-[ACP] = a UDP-2-N,3-O-bis[(3R)-3-hydroxyacyl]-alpha-D-glucosamine + holo-[ACP] + H(+). It catalyses the reaction UDP-3-O-[(3R)-3-hydroxytetradecanoyl]-alpha-D-glucosamine + (3R)-hydroxytetradecanoyl-[ACP] = UDP-2-N,3-O-bis[(3R)-3-hydroxytetradecanoyl]-alpha-D-glucosamine + holo-[ACP] + H(+). It functions in the pathway glycolipid biosynthesis; lipid IV(A) biosynthesis; lipid IV(A) from (3R)-3-hydroxytetradecanoyl-[acyl-carrier-protein] and UDP-N-acetyl-alpha-D-glucosamine: step 3/6. In terms of biological role, catalyzes the N-acylation of UDP-3-O-(hydroxytetradecanoyl)glucosamine using 3-hydroxytetradecanoyl-ACP as the acyl donor. Is involved in the biosynthesis of lipid A, a phosphorylated glycolipid that anchors the lipopolysaccharide to the outer membrane of the cell. The sequence is that of UDP-3-O-(3-hydroxymyristoyl)glucosamine N-acyltransferase from Yersinia pestis bv. Antiqua (strain Antiqua).